Consider the following 241-residue polypeptide: Anti-Pycsar protein Apyc1 (241 aa).

Residues Asp17 to His215 are beta-lactamase-like. Zn(2+) contacts are provided by His59, His61, Asp63, His64, His142, Asp162, and His215.

It belongs to the nuclease anti-Pycsar protein Apyc1 family. Homodimer. It depends on Zn(2+) as a cofactor.

It carries out the reaction 3',5'-cyclic CMP + H2O = CMP + H(+). The enzyme catalyses 3',5'-cyclic UMP + H2O = UMP + H(+). Functionally, counteracts the endogenous Pycsar antiviral defense system. Phosphodiesterase that enables metal-dependent hydrolysis of host cyclic nucleotide Pycsar defense signals such as cCMP and cUMP. The chain is Anti-Pycsar protein Apyc1 from Paenibacillus harenae.